We begin with the raw amino-acid sequence, 850 residues long: Elongation factor 2 (850 aa).

The tr-type G domain maps to 17-351; that stretch reads KNIRNISVIA…QIALKLPSPL (335 aa). GTP-binding positions include 26 to 33, 159 to 162, and 213 to 215; these read AHVDHGKS, NKLD, and SGL. A Diphthamide modification is found at His707.

This sequence belongs to the TRAFAC class translation factor GTPase superfamily. Classic translation factor GTPase family. EF-G/EF-2 subfamily.

It localises to the cytoplasm. The catalysed reaction is GTP + H2O = GDP + phosphate + H(+). Its pathway is protein biosynthesis; polypeptide chain elongation. Its function is as follows. Catalyzes the GTP-dependent ribosomal translocation step during translation elongation. During this step, the ribosome changes from the pre-translocational (PRE) to the post-translocational (POST) state as the newly formed A-site-bound peptidyl-tRNA and P-site-bound deacylated tRNA move to the P and E sites, respectively. Catalyzes the coordinated movement of the two tRNA molecules, the mRNA and conformational changes in the ribosome. In Encephalitozoon cuniculi (strain GB-M1) (Microsporidian parasite), this protein is Elongation factor 2 (EFT1).